The following is a 477-amino-acid chain: Cytochrome P450 708A2 (477 aa).

The helical transmembrane segment at 3–23 (FVWSAAVWVIAVAAVVISKWL) threads the bilayer. Cysteine 426 serves as a coordination point for heme.

The protein belongs to the cytochrome P450 family. Requires heme as cofactor. As to expression, expressed primarily in the root epidermis.

Its subcellular location is the membrane. Hydroxylates thalianol into thalian-diol. The polypeptide is Cytochrome P450 708A2 (CYP708A2) (Arabidopsis thaliana (Mouse-ear cress)).